A 657-amino-acid polypeptide reads, in one-letter code: Probable Xaa-Pro aminopeptidase P (657 aa).

Mn(2+) is bound by residues Asp-453, Asp-464, Glu-562, and Glu-576.

Belongs to the peptidase M24B family. The cofactor is Mn(2+).

It carries out the reaction Release of any N-terminal amino acid, including proline, that is linked to proline, even from a dipeptide or tripeptide.. Catalyzes the removal of a penultimate prolyl residue from the N-termini of peptides. The polypeptide is Probable Xaa-Pro aminopeptidase P (ampp) (Talaromyces stipitatus (strain ATCC 10500 / CBS 375.48 / QM 6759 / NRRL 1006) (Penicillium stipitatum)).